The primary structure comprises 600 residues: Prostaglandin G/H synthase 1 (600 aa).

Positions 1 to 24 are cleaved as a signal peptide; that stretch reads MSRQSISLRFPLLLLLLSPSPVFS. The EGF-like domain occupies 32–70; it reads PVNPCCYYPCQHQGICVRFGLDRYQCDCTRTGYSGPNCT. Intrachain disulfides connect Cys-36–Cys-47, Cys-37–Cys-159, Cys-41–Cys-57, and Cys-59–Cys-69. Asn-68 carries an N-linked (GlcNAc...) asparagine glycan. 4 helical membrane-spanning segments follow: residues 74 to 82, 86 to 92, 97 to 105, and 108 to 122; these read IWTWLRTTL, PSFIHFL, RWLWDFVNA, and IRDT…VRSN. N-linked (GlcNAc...) asparagine glycosylation is present at Asn-144. The Proton acceptor role is filled by His-207. Tyr-385 acts as the For cyclooxygenase activity in catalysis. His-388 is a binding site for heme b. Asn-410 is a glycosylation site (N-linked (GlcNAc...) asparagine). Residues Cys-569 and Cys-575 are joined by a disulfide bond.

This sequence belongs to the prostaglandin G/H synthase family. In terms of assembly, homodimer. Requires heme b as cofactor.

It is found in the endoplasmic reticulum membrane. It localises to the microsome membrane. The catalysed reaction is (5Z,8Z,11Z,14Z)-eicosatetraenoate + AH2 + 2 O2 = prostaglandin H2 + A + H2O. It catalyses the reaction (5Z,8Z,11Z,14Z)-eicosatetraenoate + 2 O2 = prostaglandin G2. The enzyme catalyses prostaglandin G2 + AH2 = prostaglandin H2 + A + H2O. It carries out the reaction (9Z,12Z)-octadecadienoate + AH2 + O2 = (9R)-hydroxy-(10E,12Z)-octadecadienoate + A + H2O. The catalysed reaction is (9Z,12Z)-octadecadienoate + AH2 + O2 = (9S)-hydroxy-(10E,12Z)-octadecadienoate + A + H2O. It catalyses the reaction (9Z,12Z)-octadecadienoate + AH2 + O2 = (13S)-hydroxy-(9Z,11E)-octadecadienoate + A + H2O. The enzyme catalyses (9Z,12Z)-octadecadienoate + AH2 + O2 = (13R)-hydroxy-(9Z,11E)-octadecadienoate + A + H2O. Its pathway is lipid metabolism; prostaglandin biosynthesis. With respect to regulation, the cyclooxygenase activity is inhibited by nonsteroidal anti-inflammatory drugs (NSAIDs) including ibuprofen, flurbiprofen, ketoprofen, naproxen, flurbiprofen, anirolac, fenclofenac and diclofenac. Functionally, dual cyclooxygenase and peroxidase that plays an important role in the biosynthesis pathway of prostanoids, a class of C20 oxylipins mainly derived from arachidonate ((5Z,8Z,11Z,14Z)-eicosatetraenoate, AA, C20:4(n-6)), with a particular role in the inflammatory response. The cyclooxygenase activity oxygenates AA to the hydroperoxy endoperoxide prostaglandin G2 (PGG2), and the peroxidase activity reduces PGG2 to the hydroxy endoperoxide prostaglandin H2 (PGH2), the precursor of all 2-series prostaglandins and thromboxanes. This complex transformation is initiated by abstraction of hydrogen at carbon 13 (with S-stereochemistry), followed by insertion of molecular O2 to form the endoperoxide bridge between carbon 9 and 11 that defines prostaglandins. The insertion of a second molecule of O2 (bis-oxygenase activity) yields a hydroperoxy group in PGG2 that is then reduced to PGH2 by two electrons. Involved in the constitutive production of prostanoids in particular in the stomach and platelets. In gastric epithelial cells, it is a key step in the generation of prostaglandins, such as prostaglandin E2 (PGE2), which plays an important role in cytoprotection. In platelets, it is involved in the generation of thromboxane A2 (TXA2), which promotes platelet activation and aggregation, vasoconstriction and proliferation of vascular smooth muscle cells. Can also use linoleate (LA, (9Z,12Z)-octadecadienoate, C18:2(n-6)) as substrate and produce hydroxyoctadecadienoates (HODEs) in a regio- and stereospecific manner, being (9R)-HODE ((9R)-hydroxy-(10E,12Z)-octadecadienoate) and (13S)-HODE ((13S)-hydroxy-(9Z,11E)-octadecadienoate) its major products. The chain is Prostaglandin G/H synthase 1 (PTGS1) from Ovis aries (Sheep).